The primary structure comprises 271 residues: Ribosomal RNA small subunit methyltransferase A (271 aa).

Positions 28, 30, 54, 75, 99, and 117 each coordinate S-adenosyl-L-methionine.

This sequence belongs to the class I-like SAM-binding methyltransferase superfamily. rRNA adenine N(6)-methyltransferase family. RsmA subfamily.

It localises to the cytoplasm. It carries out the reaction adenosine(1518)/adenosine(1519) in 16S rRNA + 4 S-adenosyl-L-methionine = N(6)-dimethyladenosine(1518)/N(6)-dimethyladenosine(1519) in 16S rRNA + 4 S-adenosyl-L-homocysteine + 4 H(+). Functionally, specifically dimethylates two adjacent adenosines (A1518 and A1519) in the loop of a conserved hairpin near the 3'-end of 16S rRNA in the 30S particle. May play a critical role in biogenesis of 30S subunits. This is Ribosomal RNA small subunit methyltransferase A from Thermus thermophilus (strain ATCC BAA-163 / DSM 7039 / HB27).